A 315-amino-acid polypeptide reads, in one-letter code: Lipoyl synthase (315 aa).

The segment at 1-33 (MADMPPVLRHPEKAHRPDQPQPKKPDWIRVKAP) is disordered. Over residues 9–29 (RHPEKAHRPDQPQPKKPDWIR) the composition is skewed to basic and acidic residues. [4Fe-4S] cluster contacts are provided by C54, C59, C65, C80, C84, C87, and S294. In terms of domain architecture, Radical SAM core spans 66-283 (WSQGHATMMI…EKAAYGKGFL (218 aa)).

It belongs to the radical SAM superfamily. Lipoyl synthase family. Requires [4Fe-4S] cluster as cofactor.

It is found in the cytoplasm. It carries out the reaction [[Fe-S] cluster scaffold protein carrying a second [4Fe-4S](2+) cluster] + N(6)-octanoyl-L-lysyl-[protein] + 2 oxidized [2Fe-2S]-[ferredoxin] + 2 S-adenosyl-L-methionine + 4 H(+) = [[Fe-S] cluster scaffold protein] + N(6)-[(R)-dihydrolipoyl]-L-lysyl-[protein] + 4 Fe(3+) + 2 hydrogen sulfide + 2 5'-deoxyadenosine + 2 L-methionine + 2 reduced [2Fe-2S]-[ferredoxin]. It functions in the pathway protein modification; protein lipoylation via endogenous pathway; protein N(6)-(lipoyl)lysine from octanoyl-[acyl-carrier-protein]: step 2/2. In terms of biological role, catalyzes the radical-mediated insertion of two sulfur atoms into the C-6 and C-8 positions of the octanoyl moiety bound to the lipoyl domains of lipoate-dependent enzymes, thereby converting the octanoylated domains into lipoylated derivatives. The protein is Lipoyl synthase of Paracoccus denitrificans (strain Pd 1222).